The primary structure comprises 99 residues: MDFQKLAQELKKMQNTLSKKQKEFEEKVFDFDYKGYVLIKIKGNLTIESIEVKTEIVDPEDKETLQDILRAAVNEAISKTCKERDAIMNSTIPKGTGFF.

This sequence belongs to the YbaB/EbfC family. Homodimer.

The protein localises to the cytoplasm. The protein resides in the nucleoid. Binds to DNA and alters its conformation. May be involved in regulation of gene expression, nucleoid organization and DNA protection. The polypeptide is Nucleoid-associated protein UUR10_0100 (Ureaplasma urealyticum serovar 10 (strain ATCC 33699 / Western)).